The sequence spans 354 residues: tRNA-specific 2-thiouridylase MnmA (354 aa).

ATP is bound by residues 6-13 (LLSGGVDS) and leucine 33. Cysteine 100 (nucleophile) is an active-site residue. Cysteine 100 and cysteine 195 are disulfide-bonded. Residue glycine 123 coordinates ATP. The interval 145–147 (KDQ) is interaction with tRNA. Catalysis depends on cysteine 195, which acts as the Cysteine persulfide intermediate.

It belongs to the MnmA/TRMU family.

It localises to the cytoplasm. It carries out the reaction S-sulfanyl-L-cysteinyl-[protein] + uridine(34) in tRNA + AH2 + ATP = 2-thiouridine(34) in tRNA + L-cysteinyl-[protein] + A + AMP + diphosphate + H(+). Catalyzes the 2-thiolation of uridine at the wobble position (U34) of tRNA, leading to the formation of s(2)U34. This chain is tRNA-specific 2-thiouridylase MnmA, found in Borrelia duttonii (strain Ly).